Here is a 394-residue protein sequence, read N- to C-terminus: NAD(P)H-quinone oxidoreductase subunit H (394 aa).

It belongs to the complex I 49 kDa subunit family. NDH-1 can be composed of about 15 different subunits; different subcomplexes with different compositions have been identified which probably have different functions.

It is found in the cellular thylakoid membrane. The catalysed reaction is a plastoquinone + NADH + (n+1) H(+)(in) = a plastoquinol + NAD(+) + n H(+)(out). It catalyses the reaction a plastoquinone + NADPH + (n+1) H(+)(in) = a plastoquinol + NADP(+) + n H(+)(out). Its function is as follows. NDH-1 shuttles electrons from an unknown electron donor, via FMN and iron-sulfur (Fe-S) centers, to quinones in the respiratory and/or the photosynthetic chain. The immediate electron acceptor for the enzyme in this species is believed to be plastoquinone. Couples the redox reaction to proton translocation, and thus conserves the redox energy in a proton gradient. Cyanobacterial NDH-1 also plays a role in inorganic carbon-concentration. The polypeptide is NAD(P)H-quinone oxidoreductase subunit H (Nostoc sp. (strain PCC 7120 / SAG 25.82 / UTEX 2576)).